The primary structure comprises 184 residues: ATP-dependent protease subunit HslV (184 aa).

Residue threonine 12 is part of the active site. Residues alanine 166, cysteine 169, and threonine 172 each contribute to the Na(+) site.

Belongs to the peptidase T1B family. HslV subfamily. A double ring-shaped homohexamer of HslV is capped on each side by a ring-shaped HslU homohexamer. The assembly of the HslU/HslV complex is dependent on binding of ATP.

The protein resides in the cytoplasm. The enzyme catalyses ATP-dependent cleavage of peptide bonds with broad specificity.. Allosterically activated by HslU binding. Its function is as follows. Protease subunit of a proteasome-like degradation complex believed to be a general protein degrading machinery. The sequence is that of ATP-dependent protease subunit HslV from Nitrobacter winogradskyi (strain ATCC 25391 / DSM 10237 / CIP 104748 / NCIMB 11846 / Nb-255).